The chain runs to 68 residues: Large ribosomal subunit protein bL35 (68 aa).

Belongs to the bacterial ribosomal protein bL35 family.

This is Large ribosomal subunit protein bL35 from Pelagibacter ubique (strain HTCC1062).